The primary structure comprises 148 residues: Single-stranded DNA-binding protein, mitochondrial (148 aa).

Residues 1 to 16 (MFRRPVVQVLRQFVRH) constitute a mitochondrion transit peptide. In terms of domain architecture, SSB spans 30 to 141 (LNRVQLLGRV…IIADNIIFLS (112 aa)). Phosphoserine occurs at positions 67 and 79. K113 is subject to N6-acetyllysine. The residue at position 122 (K122) is an N6-succinyllysine.

Homotetramer. Interacts with MPG/AAG, through inhibition of its glycosylase activity it potentially prevents formation of DNA breaks in ssDNA, ensuring that base removal primarily occurs in dsDNA. Interacts with POLDIP2. Interacts with PRIMPOL.

It localises to the mitochondrion. Its subcellular location is the mitochondrion matrix. The protein localises to the mitochondrion nucleoid. In terms of biological role, binds preferentially and cooperatively to pyrimidine rich single-stranded DNA (ss-DNA). In vitro, required to maintain the copy number of mitochondrial DNA (mtDNA) and plays a crucial role during mtDNA replication by stimulating the activity of the replisome components POLG and TWNK at the replication fork. Promotes the activity of the gamma complex polymerase POLG, largely by organizing the template DNA and eliminating secondary structures to favor ss-DNA conformations that facilitate POLG activity. In addition it is able to promote the 5'-3' unwinding activity of the mtDNA helicase TWNK. May also function in mtDNA repair. This chain is Single-stranded DNA-binding protein, mitochondrial (SSBP1), found in Bos taurus (Bovine).